A 352-amino-acid chain; its full sequence is Anthranilate phosphoribosyltransferase (352 aa).

5-phospho-alpha-D-ribose 1-diphosphate contacts are provided by residues glycine 96, 99-100, serine 104, 106-109, 124-132, and serine 136; these read GS, NIST, and KHGNRSVSS. Glycine 96 is an anthranilate binding site. Serine 108 serves as a coordination point for Mg(2+). Residue asparagine 127 participates in anthranilate binding. Arginine 182 is a binding site for anthranilate. Positions 241 and 242 each coordinate Mg(2+).

The protein belongs to the anthranilate phosphoribosyltransferase family. Homodimer. The cofactor is Mg(2+).

It carries out the reaction N-(5-phospho-beta-D-ribosyl)anthranilate + diphosphate = 5-phospho-alpha-D-ribose 1-diphosphate + anthranilate. It functions in the pathway amino-acid biosynthesis; L-tryptophan biosynthesis; L-tryptophan from chorismate: step 2/5. Functionally, catalyzes the transfer of the phosphoribosyl group of 5-phosphorylribose-1-pyrophosphate (PRPP) to anthranilate to yield N-(5'-phosphoribosyl)-anthranilate (PRA). The protein is Anthranilate phosphoribosyltransferase of Syntrophotalea carbinolica (strain DSM 2380 / NBRC 103641 / GraBd1) (Pelobacter carbinolicus).